A 217-amino-acid polypeptide reads, in one-letter code: 4-hydroxy-tetrahydrodipicolinate reductase (217 aa).

NAD(+)-binding positions include Gly-7 to Met-12, Gly-71 to Thr-73, and Ser-95 to Phe-98. Catalysis depends on His-127, which acts as the Proton donor/acceptor. Residue His-128 participates in (S)-2,3,4,5-tetrahydrodipicolinate binding. Lys-131 (proton donor) is an active-site residue. Residue Gly-137 to Thr-138 coordinates (S)-2,3,4,5-tetrahydrodipicolinate.

Belongs to the DapB family.

Its subcellular location is the cytoplasm. The enzyme catalyses (S)-2,3,4,5-tetrahydrodipicolinate + NAD(+) + H2O = (2S,4S)-4-hydroxy-2,3,4,5-tetrahydrodipicolinate + NADH + H(+). The catalysed reaction is (S)-2,3,4,5-tetrahydrodipicolinate + NADP(+) + H2O = (2S,4S)-4-hydroxy-2,3,4,5-tetrahydrodipicolinate + NADPH + H(+). Its pathway is amino-acid biosynthesis; L-lysine biosynthesis via DAP pathway; (S)-tetrahydrodipicolinate from L-aspartate: step 4/4. Its function is as follows. Catalyzes the conversion of 4-hydroxy-tetrahydrodipicolinate (HTPA) to tetrahydrodipicolinate. This chain is 4-hydroxy-tetrahydrodipicolinate reductase, found in Thermosipho africanus (strain TCF52B).